The sequence spans 238 residues: Large ribosomal subunit protein uL2 (238 aa).

Positions 198–238 (HPHGGGLHQSVSRPSTVSRNAPPGRKVGHIASRRTGRRGGA) are disordered. The span at 206 to 216 (QSVSRPSTVSR) shows a compositional bias: polar residues. Basic residues predominate over residues 223–238 (KVGHIASRRTGRRGGA).

Belongs to the universal ribosomal protein uL2 family. As to quaternary structure, part of the 50S ribosomal subunit. Forms a bridge to the 30S subunit in the 70S ribosome.

Its function is as follows. One of the primary rRNA binding proteins. Required for association of the 30S and 50S subunits to form the 70S ribosome, for tRNA binding and peptide bond formation. It has been suggested to have peptidyltransferase activity; this is somewhat controversial. Makes several contacts with the 16S rRNA in the 70S ribosome. The chain is Large ribosomal subunit protein uL2 from Sulfolobus acidocaldarius (strain ATCC 33909 / DSM 639 / JCM 8929 / NBRC 15157 / NCIMB 11770).